The following is a 375-amino-acid chain: MSDRGYYEVLGVSKGASDDEIKSAYRKLAIKYHPDKNKGDKEAEEKFKEATEAYEVLRDPQKRQAYDQFGKAGVNAGAGGGYGAGAYTDFSDIFGDFGDIFSEFFGGGGGGGSRGGGRRSGPQRGSDLRYNLEVSLEDAALGKEYKIEIPRLETCVDCTGSGASKGSSPTVCPDCSGTGQVRRTQGFFSVTTTCPRCKGKGKVISNPCKTCKGEGLTEKRRTIHIKIPAGVESGSRLKVSGEGESGPNGGPSGDLYVVTHIKKHPVFERQGNDLIVQKSISLSMACLGGEIEVPSIDGKTIQLKIPEGTESGQIFRLKGHGIPYLGSYGKGDQHVIIKVEIPKKLSKKQKELMEEFARESGEKVGSGGKSKLFFR.

Residues 5 to 70 (GYYEVLGVSK…QKRQAYDQFG (66 aa)) enclose the J domain. The segment at 142-220 (GKEYKIEIPR…CKGEGLTEKR (79 aa)) adopts a CR-type zinc-finger fold. Zn(2+)-binding residues include Cys-155, Cys-158, Cys-172, Cys-175, Cys-194, Cys-197, Cys-208, and Cys-211. CXXCXGXG motif repeat units lie at residues 155–162 (CVDCTGSG), 172–179 (CPDCSGTG), 194–201 (CPRCKGKG), and 208–215 (CKTCKGEG).

Belongs to the DnaJ family. Homodimer. Zn(2+) serves as cofactor.

It localises to the cytoplasm. Its function is as follows. Participates actively in the response to hyperosmotic and heat shock by preventing the aggregation of stress-denatured proteins and by disaggregating proteins, also in an autonomous, DnaK-independent fashion. Unfolded proteins bind initially to DnaJ; upon interaction with the DnaJ-bound protein, DnaK hydrolyzes its bound ATP, resulting in the formation of a stable complex. GrpE releases ADP from DnaK; ATP binding to DnaK triggers the release of the substrate protein, thus completing the reaction cycle. Several rounds of ATP-dependent interactions between DnaJ, DnaK and GrpE are required for fully efficient folding. Also involved, together with DnaK and GrpE, in the DNA replication of plasmids through activation of initiation proteins. This is Chaperone protein DnaJ from Leptospira biflexa serovar Patoc (strain Patoc 1 / Ames).